We begin with the raw amino-acid sequence, 225 residues long: MMLKKAQTTDNLKLPISLNATGWLESSPDWSNISGLVAGVDEVGRGALFGPVVAASVILPASSFPQLMTAEIKDSKKLSHSRRVQLAQQISTLAIDWRIGYATTAEIDRINILQATLLAMRRSVKKLKLQPILCLVDGNQPVQDLPILQQTIVKGDERSLNIAAASIMAKVWRDDLIQRLSTKYPMYDLKSNKGYGSKKHLLALEKHGASPLHRQSFRPCQISLD.

An RNase H type-2 domain is found at 35 to 225 (GLVAGVDEVG…SFRPCQISLD (191 aa)). The a divalent metal cation site is built by Asp41, Glu42, and Asp137.

Belongs to the RNase HII family. The cofactor is Mn(2+). Requires Mg(2+) as cofactor.

The protein resides in the cytoplasm. The enzyme catalyses Endonucleolytic cleavage to 5'-phosphomonoester.. Functionally, endonuclease that specifically degrades the RNA of RNA-DNA hybrids. In Trichormus variabilis (strain ATCC 29413 / PCC 7937) (Anabaena variabilis), this protein is Ribonuclease HII.